Here is a 271-residue protein sequence, read N- to C-terminus: Gasdermin bGSDM (271 aa).

Residue Cys-7 is the site of S-palmitoyl cysteine attachment. Transmembrane regions (beta stranded) follow at residues 74-90 (IAGT…GLSV), 102-120 (TLGV…FEFS), 168-185 (RINV…GLNL), and 194-210 (ANVK…TVSF).

It belongs to the bacterial gasdermin family. As to quaternary structure, monomer. In terms of assembly, forms large, homooligomeric ring-shaped pores when inserted in membranes. Palmitoylation helps stabilize the inactive state; may self palmitoylate. Palmitoylation plays a significant role in pore formation.

The protein resides in the cytoplasm. It is found in the cell inner membrane. The full-length protein before cleavage is inactive: intramolecular interactions between the N-terminal domain and the C-terminal region as well as the lipid modification, mediate autoinhibition. The pyroptosis-like-inducing activity is carried by the released N-terminal domain (Gasdermin bGSDM, N-terminus). Involved in defense against bacteriophages. When this probable 4 gene operon (bGSDM-FE772_23060-FE772_23065-FE772_23070) is inserted into E.coli it provides nearly 100-fold protection against phages T5 and T6 and about 8-fold against phage T4. The operon without bGSDM no longer protects against phage. Cleavage of this precursor by its dedicated protease(s) releases the active moiety (gasdermin bGSDM, N-terminus) which inserts into membranes, forming pores and triggering cell death. Functionally, pore-forming protein that causes membrane permeabilization via a pyroptosis-like activity. Makes ring-like pores when released. The chain is Gasdermin bGSDM from Lysobacter enzymogenes.